The sequence spans 147 residues: MSRLDVTEKIITAKVMKGLKWADVAAKLNLSKEWVTAACLGQMTLNAEQAKIIAEIFDLSDEDQKWLMVTPCKGSLPTAVPTDPLIYRFYEMINVYGTTIKQLIHEEFGDGIMSAIDFKMDLQRVADPMGDRVNIVLNGKFLPYKQF.

Residues Arg-88, Glu-91, and Ser-114 contribute to the active site.

This sequence belongs to the cyanase family.

The enzyme catalyses cyanate + hydrogencarbonate + 3 H(+) = NH4(+) + 2 CO2. In terms of biological role, catalyzes the reaction of cyanate with bicarbonate to produce ammonia and carbon dioxide. This is Cyanate hydratase from Methylobacillus flagellatus (strain ATCC 51484 / DSM 6875 / VKM B-1610 / KT).